Consider the following 709-residue polypeptide: Threonine--tRNA ligase, mitochondrial 1 (709 aa).

A mitochondrion-targeting transit peptide spans 1-21; the sequence is MLLRLTARSIRRFTTSSSSLP. Residues 73–135 form the TGS domain; the sequence is DPIKVTLPDG…EGDCKLELFK (63 aa). C407, H458, and H584 together coordinate Zn(2+).

Belongs to the class-II aminoacyl-tRNA synthetase family.

It is found in the mitochondrion. It localises to the cytoplasm. Its subcellular location is the cytosol. The enzyme catalyses tRNA(Thr) + L-threonine + ATP = L-threonyl-tRNA(Thr) + AMP + diphosphate + H(+). The polypeptide is Threonine--tRNA ligase, mitochondrial 1 (Arabidopsis thaliana (Mouse-ear cress)).